Consider the following 293-residue polypeptide: MAAITASMVAELRAKTDAPMMECKKALTEADGDLAKAEELLRVKLGNKASKAASRVTAEGVVASFVGGNAGALVELNCETDFVAKNDDFLAFSKTVAELVATQNPADVAALSALPLEGSTVDAVRLALIGKIGENVSIRRFVRFETANKIATYLHGARIGVIVEYTGADEQVGKDVAMHIAAMKPVALSSADVPAELIDTERRVAEQKAAESGKPAEIVAKMVDGSVQKYLKEVSLLNQTFVKNDKQTIEQMLKAANSTVQKFALFVVGEGIEKRQDDFAAEVAAQVAAAKQQ.

An involved in Mg(2+) ion dislocation from EF-Tu region spans residues 80 to 83 (TDFV).

The protein belongs to the EF-Ts family.

Its subcellular location is the cytoplasm. Functionally, associates with the EF-Tu.GDP complex and induces the exchange of GDP to GTP. It remains bound to the aminoacyl-tRNA.EF-Tu.GTP complex up to the GTP hydrolysis stage on the ribosome. This is Elongation factor Ts from Burkholderia ambifaria (strain MC40-6).